Reading from the N-terminus, the 153-residue chain is Interleukin-4 (153 aa).

Residues Met-1–Gly-24 form the signal peptide. Disulfide bonds link Cys-27–Cys-151, Cys-48–Cys-89, and Cys-70–Cys-123. N-linked (GlcNAc...) asparagine glycosylation occurs at Asn-62. Asn-129 carries an N-linked (GlcNAc...) asparagine glycan.

Belongs to the IL-4/IL-13 family.

The protein localises to the secreted. Functionally, participates in at least several B-cell activation processes as well as of other cell types. It is a costimulator of DNA-synthesis. It induces the expression of class II MHC molecules on resting B-cells. It enhances both secretion and cell surface expression of IgE and IgG1. It also regulates the expression of the low affinity Fc receptor for IgE (CD23) on both lymphocytes and monocytes. Positively regulates IL31RA expression in macrophages. Stimulates autophagy in dendritic cells by interfering with mTORC1 signaling and through the induction of RUFY4. This Macaca mulatta (Rhesus macaque) protein is Interleukin-4 (IL4).